We begin with the raw amino-acid sequence, 321 residues long: MQITFLGTSSGVPTRSRNVSSIALRLPQRAELWLFDCGEGTQHQFLRSDLKVSQLSRIFITHMHGDHVFGLMGLLASCGLGGNVKSVTLYGPPALEDYLQAGLRYSQTHLAYPIKVHKSKPGVIYEDDEYVVSCAYLKHRVTAFGYRVTEKDRPGHFNVEKAKALGIPPGPIYRKLKQGEFVTLPDGRKINGADLCGAPHVGRKFVYCTDTVFCDGAVELSQGADLLVHEATFSHQDAEMAFQRLHSTSTMAAQVALAAGVKHLMMTHFSPRYAPGNSVLLDDLLQEARAIFPNTDMAYDFLSYEIPRWNEVSQLLAKARS.

7 residues coordinate Zn(2+): histidine 62, histidine 64, aspartate 66, histidine 67, histidine 139, aspartate 210, and histidine 268. Aspartate 66 serves as the catalytic Proton acceptor.

Belongs to the RNase Z family. In terms of assembly, homodimer. Requires Zn(2+) as cofactor.

It carries out the reaction Endonucleolytic cleavage of RNA, removing extra 3' nucleotides from tRNA precursor, generating 3' termini of tRNAs. A 3'-hydroxy group is left at the tRNA terminus and a 5'-phosphoryl group is left at the trailer molecule.. In terms of biological role, zinc phosphodiesterase, which displays some tRNA 3'-processing endonuclease activity. Probably involved in tRNA maturation, by removing a 3'-trailer from precursor tRNA. This chain is Ribonuclease Z, found in Trichodesmium erythraeum (strain IMS101).